The sequence spans 135 residues: Galectin-1 (135 aa).

Alanine 2 is subject to N-acetylalanine. A Galectin domain is found at 4 to 135 (GLVASNLNLK…DFKIKCVAFD (132 aa)). 2 positions are modified to N6-acetyllysine: lysine 13 and lysine 29. At serine 30 the chain carries Phosphoserine. A beta-D-galactoside is bound by residues 45–49 (HFNPR), histidine 53, asparagine 62, and 69–72 (WGAE). Lysine 108 carries the N6-acetyllysine; alternate modification. Position 108 is an N6-succinyllysine; alternate (lysine 108). N6-acetyllysine is present on lysine 128.

Homodimer. Binds LGALS3BP. Interacts with CD2, CD3, CD4, CD6, CD7, CD43, ALCAM and CD45. Interacts with laminin (via poly-N-acetyllactosamine). Interacts with SUSD2. Interacts with cargo receptor TMED10; the interaction mediates the translocation from the cytoplasm into the ERGIC (endoplasmic reticulum-Golgi intermediate compartment) and thereby secretion. Post-translationally, the N-terminus is blocked.

Its subcellular location is the secreted. The protein localises to the extracellular space. The protein resides in the extracellular matrix. It localises to the cytoplasm. Functionally, lectin that binds beta-galactoside and a wide array of complex carbohydrates. Plays a role in regulating apoptosis, cell proliferation and cell differentiation. Inhibits CD45 protein phosphatase activity and therefore the dephosphorylation of Lyn kinase. Strong inducer of T-cell apoptosis. This Bubalus bubalis (Domestic water buffalo) protein is Galectin-1.